A 64-amino-acid chain; its full sequence is Conotoxin Im11.4 (64 aa).

The N-terminal stretch at 1-26 (MMFRLTSVSCILLVIAFLNLVGLTNA) is a signal peptide. Disulfide bonds link C27–C41, C34–C46, C40–C50, and C45–C54. Residue H57 is modified to Histidine amide. Residues 61–64 (ATFQ) constitute a propeptide that is removed on maturation.

The protein belongs to the conotoxin I2 superfamily. As to expression, expressed by the venom duct.

The protein resides in the secreted. In Conus imperialis (Imperial cone), this protein is Conotoxin Im11.4.